A 218-amino-acid polypeptide reads, in one-letter code: Thiopurine S-methyltransferase (218 aa).

Residues Trp-10, Leu-45, Glu-66, and Arg-123 each coordinate S-adenosyl-L-methionine.

Belongs to the class I-like SAM-binding methyltransferase superfamily. TPMT family.

Its subcellular location is the cytoplasm. It carries out the reaction S-adenosyl-L-methionine + a thiopurine = S-adenosyl-L-homocysteine + a thiopurine S-methylether.. Involved in the biological cycling of tellurium and selenium. Tellurium resistance (Ter) mechanism. This is Thiopurine S-methyltransferase from Pseudomonas syringae pv. pisi.